Reading from the N-terminus, the 226-residue chain is 2-C-methyl-D-erythritol 4-phosphate cytidylyltransferase (226 aa).

It belongs to the IspD/TarI cytidylyltransferase family. IspD subfamily.

It catalyses the reaction 2-C-methyl-D-erythritol 4-phosphate + CTP + H(+) = 4-CDP-2-C-methyl-D-erythritol + diphosphate. It participates in isoprenoid biosynthesis; isopentenyl diphosphate biosynthesis via DXP pathway; isopentenyl diphosphate from 1-deoxy-D-xylulose 5-phosphate: step 2/6. Catalyzes the formation of 4-diphosphocytidyl-2-C-methyl-D-erythritol from CTP and 2-C-methyl-D-erythritol 4-phosphate (MEP). This is 2-C-methyl-D-erythritol 4-phosphate cytidylyltransferase from Bacillus thuringiensis (strain Al Hakam).